The chain runs to 180 residues: Flavin prenyltransferase UbiX (180 aa).

Residues 9–11 (GAS), serine 33, 84–87 (SITT), and arginine 119 each bind FMN. Dimethylallyl phosphate-binding residues include tyrosine 149 and arginine 165.

The protein belongs to the UbiX/PAD1 family.

It carries out the reaction dimethylallyl phosphate + FMNH2 = prenylated FMNH2 + phosphate. In terms of biological role, flavin prenyltransferase that catalyzes the synthesis of the prenylated FMN cofactor (prenyl-FMN) for 4-hydroxy-3-polyprenylbenzoic acid decarboxylase UbiD. The prenyltransferase is metal-independent and links a dimethylallyl moiety from dimethylallyl monophosphate (DMAP) to the flavin N5 and C6 atoms of FMN. This is Flavin prenyltransferase UbiX from Thermoplasma acidophilum (strain ATCC 25905 / DSM 1728 / JCM 9062 / NBRC 15155 / AMRC-C165).